The chain runs to 240 residues: Small ribosomal subunit protein eS4 (240 aa).

Positions 37–99 (VPLVVLLRDV…RGEFFRVFPD (63 aa)) constitute an S4 RNA-binding domain.

The protein belongs to the eukaryotic ribosomal protein eS4 family.

The chain is Small ribosomal subunit protein eS4 from Halorubrum lacusprofundi (strain ATCC 49239 / DSM 5036 / JCM 8891 / ACAM 34).